The primary structure comprises 368 residues: MSAQSVEEDSILIIPNPDEEEKILRVKLEEDPDGEEGSSISWNHLPDPEIFRQRFRQFGYQDSPGPREAVSQLRELCRLWLRPETHTKEQILELVVLEQFVAILPRELQTLVREHHPENGEEAVTVLEDLESELDDPGQPVSLRRRKREVLVEEIASQEDAQGLPSSELDAVENQLKWASWELHSLRHCDDDATAENGALAPKQEIASAGESHEVPGTLNIGVPQIFKYGETCFPKGRFERKRNPSRKKQHICDECGKHFSQGSALILHQRIHSGEKPYGCVECGKAFSRSSILVQHQRVHTGEKPYKCLECGKAFSQNSGLINHQRIHTGEKPYECVQCGKSYSQSSNLFRHQRRHNAEKLLNVVKV.

A Glycyl lysine isopeptide (Lys-Gly) (interchain with G-Cter in SUMO2) cross-link involves residue Lys-22. Residue Lys-27 forms a Glycyl lysine isopeptide (Lys-Gly) (interchain with G-Cter in SUMO1); alternate linkage. Residue Lys-27 forms a Glycyl lysine isopeptide (Lys-Gly) (interchain with G-Cter in SUMO2); alternate linkage. An SCAN box domain is found at 52-134 (RQRFRQFGYQ…TVLEDLESEL (83 aa)). Residues Ser-132 and Ser-142 each carry the phosphoserine modification. Glycyl lysine isopeptide (Lys-Gly) (interchain with G-Cter in SUMO2) cross-links involve residues Lys-147, Lys-177, and Lys-236. Residues 251–273 (HICDECGKHFSQGSALILHQRIH) form a C2H2-type 1 zinc finger. The necessary and sufficient for nuclear localization stretch occupies residues 251–301 (HICDECGKHFSQGSALILHQRIHSGEKPYGCVECGKAFSRSSILVQHQRVH). Phosphoserine is present on Ser-274. Glycyl lysine isopeptide (Lys-Gly) (interchain with G-Cter in SUMO2) cross-links involve residues Lys-277 and Lys-286. C2H2-type zinc fingers lie at residues 279-301 (YGCVECGKAFSRSSILVQHQRVH), 307-329 (YKCLECGKAFSQNSGLINHQRIH), and 335-357 (YECVQCGKSYSQSSNLFRHQRRH). Ser-292 carries the phosphoserine modification. Tyr-335 bears the Phosphotyrosine mark. Residues Lys-361 and Lys-367 each participate in a glycyl lysine isopeptide (Lys-Gly) (interchain with G-Cter in SUMO2) cross-link.

Belongs to the krueppel C2H2-type zinc-finger protein family. In terms of processing, sumoylated.

It is found in the nucleus. Its function is as follows. Transcription factor required for myelination of differentiated oligodendrocytes. Required for the conversion of oligodendrocytes from the premyelinating to the myelinating state. In the developing central nervous system (CNS), involved in the maintenance in the progenitor stage by promoting the cell cycle. Specifically binds to the 5'-TCAT-3' DNA sequence. Has transcription repressor activity in vitro. The sequence is that of Zinc finger protein 24 (Znf24) from Rattus norvegicus (Rat).